Here is a 92-residue protein sequence, read N- to C-terminus: DNA-directed RNA polymerase subunit Rpo11 (92 aa).

The protein belongs to the archaeal Rpo11/eukaryotic RPB11/RPC19 RNA polymerase subunit family. In terms of assembly, part of the 13-subunit RNA polymerase complex.

Its subcellular location is the cytoplasm. It catalyses the reaction RNA(n) + a ribonucleoside 5'-triphosphate = RNA(n+1) + diphosphate. Functionally, DNA-dependent RNA polymerase (RNAP) catalyzes the transcription of DNA into RNA using the four ribonucleoside triphosphates as substrates. This chain is DNA-directed RNA polymerase subunit Rpo11, found in Saccharolobus shibatae (strain ATCC 51178 / DSM 5389 / JCM 8931 / NBRC 15437 / B12) (Sulfolobus shibatae).